The following is a 345-amino-acid chain: Tyrosine--tRNA ligase (345 aa).

Tyr36 provides a ligand contact to L-tyrosine. The short motif at Pro41–His49 is the 'HIGH' region element. Residues Tyr163, Gln167, Asp170, and Gln185 each coordinate L-tyrosine.

The protein belongs to the class-I aminoacyl-tRNA synthetase family. TyrS type 3 subfamily. Homodimer.

It is found in the cytoplasm. It catalyses the reaction tRNA(Tyr) + L-tyrosine + ATP = L-tyrosyl-tRNA(Tyr) + AMP + diphosphate + H(+). Functionally, catalyzes the attachment of tyrosine to tRNA(Tyr) in a two-step reaction: tyrosine is first activated by ATP to form Tyr-AMP and then transferred to the acceptor end of tRNA(Tyr). The chain is Tyrosine--tRNA ligase from Natronomonas pharaonis (strain ATCC 35678 / DSM 2160 / CIP 103997 / JCM 8858 / NBRC 14720 / NCIMB 2260 / Gabara) (Halobacterium pharaonis).